Consider the following 518-residue polypeptide: DNA nucleotidylexotransferase (518 aa).

The Nuclear localization signal signature appears at 11-17 (FGKKRQK). Positions 27 to 124 (IYEIKFHEFV…KPVDTKGKYQ (98 aa)) constitute a BRCT domain. The tract at residues 153–518 (SQYACQRRTT…EYIQPSERNA (366 aa)) is mediates interaction with DNTTIP2. The tract at residues 260–264 (VGLKT) is involved in DNA binding. A 2'-deoxyribonucleoside 5'-triphosphate is bound by residues 335–340 (GFRRGK) and 344–347 (HDVD). The Mg(2+) site is built by D345, D347, and D442. 457–458 (GW) contacts a 2'-deoxyribonucleoside 5'-triphosphate.

The protein belongs to the DNA polymerase type-X family. In terms of assembly, interacts with PRP19 and DNTTIP1. Interacts with TRERF1. Forms a ternary complex with DNTTIP2 and core histone. Released from this complex by PCNA. It depends on Mg(2+) as a cofactor.

It localises to the nucleus. It carries out the reaction DNA(n) + a 2'-deoxyribonucleoside 5'-triphosphate = DNA(n+1) + diphosphate. Functionally, template-independent DNA polymerase which catalyzes the random addition of deoxynucleoside 5'-triphosphate to the 3'-end of a DNA initiator. One of the in vivo functions of this enzyme is the addition of nucleotides at the junction (N region) of rearranged Ig heavy chain and T-cell receptor gene segments during the maturation of B- and T-cells. The polypeptide is DNA nucleotidylexotransferase (DNTT) (Monodelphis domestica (Gray short-tailed opossum)).